Consider the following 511-residue polypeptide: Inactive cytochrome P450 monooxygenase cloA (511 aa).

The helical transmembrane segment at 17–37 threads the bilayer; that stretch reads ILLTAGLCVPCALVIHGIYNL. N-linked (GlcNAc...) asparagine glycosylation is found at asparagine 81 and asparagine 344. Cysteine 450 contacts heme.

It belongs to the cytochrome P450 family. The cofactor is heme.

Its subcellular location is the membrane. In terms of biological role, inactive cytochrome P450 monooxygenase; part of the gene cluster that mediates the biosynthesis of fungal ergot alkaloid. DmaW catalyzes the first step of ergot alkaloid biosynthesis by condensing dimethylallyl diphosphate (DMAP) and tryptophan to form 4-dimethylallyl-L-tryptophan. The second step is catalyzed by the methyltransferase easF that methylates 4-dimethylallyl-L-tryptophan in the presence of S-adenosyl-L-methionine, resulting in the formation of 4-dimethylallyl-L-abrine. The catalase easC and the FAD-dependent oxidoreductase easE then transform 4-dimethylallyl-L-abrine to chanoclavine-I which is further oxidized by easD in the presence of NAD(+), resulting in the formation of chanoclavine-I aldehyde. Agroclavine dehydrogenase easG then mediates the conversion of chanoclavine-I aldehyde to agroclavine via a non-enzymatic adduct reaction: the substrate is an iminium intermediate that is formed spontaneously from chanoclavine-I aldehyde in the presence of glutathione. Further conversion of agroclavine to paspalic acid is a two-step process involving oxidation of agroclavine to elymoclavine and of elymoclavine to paspalic acid, the second step being performed by the elymoclavine oxidase cloA. However, cloA does not encode a functional enzyme indicating that C.fusiformis terminates its ergot alkaloid pathway at elymoclavine. This is Inactive cytochrome P450 monooxygenase cloA from Claviceps fusiformis (Ergot fungus).